Reading from the N-terminus, the 281-residue chain is Phosphate import ATP-binding protein PstB 1 (281 aa).

Positions 1–34 (MTENTAETADESSDGGVTATTGAATTTPTTPPEP) are disordered. The span at 15–28 (GGVTATTGAATTTP) shows a compositional bias: low complexity. The region spanning 36 to 276 (IRARDLDVFY…PEHQRVEEYI (241 aa)) is the ABC transporter domain. Residue 68-75 (GPSGCGKS) coordinates ATP.

This sequence belongs to the ABC transporter superfamily. Phosphate importer (TC 3.A.1.7) family. In terms of assembly, the complex is composed of two ATP-binding proteins (PstB), two transmembrane proteins (PstC and PstA) and a solute-binding protein (PstS).

The protein resides in the cell membrane. The enzyme catalyses phosphate(out) + ATP + H2O = ADP + 2 phosphate(in) + H(+). Its function is as follows. Part of the ABC transporter complex PstSACB involved in phosphate import. Responsible for energy coupling to the transport system. The polypeptide is Phosphate import ATP-binding protein PstB 1 (Halobacterium salinarum (strain ATCC 700922 / JCM 11081 / NRC-1) (Halobacterium halobium)).